We begin with the raw amino-acid sequence, 804 residues long: Probable exo-1,4-beta-xylosidase xlnD (804 aa).

Positions 1 to 26 (MAHSMSRPVAATAAALLALALPQALA) are cleaved as a signal peptide. Residues Asn29, Asn124, Asn148, Asn242, and Asn251 are each glycosylated (N-linked (GlcNAc...) asparagine). Asp315 is a catalytic residue. N-linked (GlcNAc...) asparagine glycans are attached at residues Asn357, Asn390, Asn413, Asn444, Asn455, Asn573, Asn576, Asn665, Asn696, and Asn718.

It belongs to the glycosyl hydrolase 3 family.

It localises to the secreted. It carries out the reaction Hydrolysis of (1-&gt;4)-beta-D-xylans, to remove successive D-xylose residues from the non-reducing termini.. It participates in glycan degradation; xylan degradation. Its function is as follows. Xylan 1,4-beta-xylosidase involved in the hydrolysis of xylan, a major structural heterogeneous polysaccharide found in plant biomass representing the second most abundant polysaccharide in the biosphere, after cellulose. This chain is Probable exo-1,4-beta-xylosidase xlnD (xlnD), found in Aspergillus niger (strain ATCC MYA-4892 / CBS 513.88 / FGSC A1513).